The sequence spans 947 residues: Vacuolar membrane protease (947 aa).

Over 1 to 15 (MRFKALLRAIFRFRK) the chain is Cytoplasmic. The helical transmembrane segment at 16-36 (TNFSILLIITYAIIIALLVFD) threads the bilayer. The Vacuolar segment spans residues 37-358 (RSRYKLDLPN…GLFFVVVDTK (322 aa)). N-linked (GlcNAc...) asparagine glycosylation is found at asparagine 46, asparagine 92, asparagine 108, and asparagine 121. The Zn(2+) site is built by histidine 156 and aspartate 168. The Proton acceptor role is filled by glutamate 200. Residues glutamate 201, glutamate 226, and histidine 300 each coordinate Zn(2+). Asparagine 319 carries an N-linked (GlcNAc...) asparagine glycan. The helical transmembrane segment at 359-379 (HLFYADIFMLIVGPILLMMKA) threads the bilayer. Residues 380–391 (HLDKRRRLERSR) lie on the Cytoplasmic side of the membrane. Residues 392 to 412 (LVQLRLLLSLGLSVVFLLLLT) form a helical membrane-spanning segment. Residues 413–428 (KSLNSFNPFVYSADYR) lie on the Vacuolar side of the membrane. The chain crosses the membrane as a helical span at residues 429–449 (TPLTGLFLLFVTVNYLIVTLA). Topologically, residues 450–458 (ERLNPTESY) are cytoplasmic. The chain crosses the membrane as a helical span at residues 459 to 479 (KTVAINQIFIIAWLMQLYITL). The Vacuolar portion of the chain corresponds to 480 to 489 (RMAKSDFTLT). Residues 490 to 510 (GTYPLSIFSGCLIVALSLGLF) traverse the membrane as a helical segment. Residues 511–601 (GTKNKAVNDA…DKNSDFSKHY (91 aa)) lie on the Cytoplasmic side of the membrane. Composition is skewed to polar residues over residues 522–531 (NSSVRYASSQ) and 546–567 (NINQVRDTGNQEVTSNTNTDLH). The disordered stretch occupies residues 522-573 (NSSVRYASSQNDEDNPLPSQDRGENINQVRDTGNQEVTSNTNTDLHSNAEEV). The helical transmembrane segment at 602–622 (NWIVQFLCIVPISSFIFLFSL) threads the bilayer. Residues 623 to 641 (DYTLDAIHKMVQETTDDVQ) are Vacuolar-facing. Residues 642 to 662 (LICIIITIGVILLALPILPFI) form a helical membrane-spanning segment. At 663 to 669 (SKLNYQS) the chain is on the cytoplasmic side. A helical transmembrane segment spans residues 670–690 (SVIIAIIGVLLFGKSLVMQPF). The Vacuolar segment spans residues 691–947 (SEIAPLKVRF…LVVIKDKIQL (257 aa)). Asparagine 742, asparagine 784, asparagine 801, and asparagine 833 each carry an N-linked (GlcNAc...) asparagine glycan.

The protein belongs to the peptidase M28 family. Requires Zn(2+) as cofactor.

The protein localises to the vacuole membrane. Functionally, may be involved in vacuolar sorting and osmoregulation. The polypeptide is Vacuolar membrane protease (Candida glabrata (strain ATCC 2001 / BCRC 20586 / JCM 3761 / NBRC 0622 / NRRL Y-65 / CBS 138) (Yeast)).